Here is a 375-residue protein sequence, read N- to C-terminus: Trichodiene synthase (375 aa).

The protein belongs to the trichodiene synthase family.

It catalyses the reaction (2E,6E)-farnesyl diphosphate = trichodiene + diphosphate. It participates in sesquiterpene biosynthesis; trichothecene biosynthesis. TS is a member of the terpene cyclase group of enzymes. It catalyzes the isomerization and cyclization of farnesyl pyro-phosphate to form trichodiene, the first cyclic intermediate in the biosynthetic pathway for trichothecenes. It serves to branch trichothecene biosynthesis from the isoprenoid pathway. The chain is Trichodiene synthase (TRI5) from Fusarium asiaticum.